Reading from the N-terminus, the 182-residue chain is Proline-rich protein, Y-linked (182 aa).

Disordered stretches follow at residues 1 to 22 (MMRRSPSGLKSPRVSQGRKPRD) and 89 to 108 (VPADPPPASPYRTSPRPPPG). The segment covering 91 to 108 (ADPPPASPYRTSPRPPPG) has biased composition (pro residues). A DUF1725 domain is found at 154–167 (WMKLETIILSKLSQ).

This chain is Proline-rich protein, Y-linked (PRORY), found in Homo sapiens (Human).